A 370-amino-acid polypeptide reads, in one-letter code: Dihydrolipoyllysine-residue acetyltransferase component of acetoin cleaving system (370 aa).

The Lipoyl-binding domain maps to 4–79 (IHTLTMPKWG…PVGALLAVVV (76 aa)). At Lys-45 the chain carries N6-lipoyllysine. One can recognise an AB hydrolase-1 domain in the interval 135–355 (PLVLVHGFGG…EAGHMVQMEA (221 aa)).

(R)-lipoate serves as cofactor.

The enzyme catalyses N(6)-[(R)-dihydrolipoyl]-L-lysyl-[protein] + acetyl-CoA = N(6)-[(R)-S(8)-acetyldihydrolipoyl]-L-lysyl-[protein] + CoA. The protein operates within ketone degradation; acetoin degradation. The sequence is that of Dihydrolipoyllysine-residue acetyltransferase component of acetoin cleaving system (acoC) from Pseudomonas putida (Arthrobacter siderocapsulatus).